The following is a 388-amino-acid chain: Lipid-A-disaccharide synthase (388 aa).

It belongs to the LpxB family.

It catalyses the reaction a lipid X + a UDP-2-N,3-O-bis[(3R)-3-hydroxyacyl]-alpha-D-glucosamine = a lipid A disaccharide + UDP + H(+). Its pathway is bacterial outer membrane biogenesis; LPS lipid A biosynthesis. Its function is as follows. Condensation of UDP-2,3-diacylglucosamine and 2,3-diacylglucosamine-1-phosphate to form lipid A disaccharide, a precursor of lipid A, a phosphorylated glycolipid that anchors the lipopolysaccharide to the outer membrane of the cell. This is Lipid-A-disaccharide synthase from Burkholderia mallei (strain NCTC 10247).